The chain runs to 221 residues: PKHD-type hydroxylase PMT_0286 (221 aa).

The 95-residue stretch at 80–174 folds into the Fe2OG dioxygenase domain; that stretch reads HIHGVMFSRS…RLVCVGWIQS (95 aa). 3 residues coordinate Fe cation: histidine 98, aspartate 100, and histidine 155. Residue arginine 165 coordinates 2-oxoglutarate.

The cofactor is Fe(2+). L-ascorbate is required as a cofactor.

The polypeptide is PKHD-type hydroxylase PMT_0286 (Prochlorococcus marinus (strain MIT 9313)).